Reading from the N-terminus, the 432-residue chain is Probable M18 family aminopeptidase 2 (432 aa).

His-86, His-157, and His-408 together coordinate Zn(2+).

This sequence belongs to the peptidase M18 family. Zn(2+) serves as cofactor.

The protein is Probable M18 family aminopeptidase 2 (apeB) of Streptomyces coelicolor (strain ATCC BAA-471 / A3(2) / M145).